The sequence spans 86 residues: Anti-adapter protein IraP (86 aa).

Residues 1–36 adopt a coiled-coil conformation; the sequence is MKNLIAELLFKLAQKEEESKELCAQVEALEIIVTAM.

The protein belongs to the IraP family. Interacts with RssB.

Its subcellular location is the cytoplasm. Its function is as follows. Inhibits RpoS proteolysis by regulating RssB activity, thereby increasing the stability of the sigma stress factor RpoS especially during phosphate starvation, but also in stationary phase and during nitrogen starvation. Its effect on RpoS stability is due to its interaction with RssB, which probably blocks the interaction of RssB with RpoS, and the consequent delivery of the RssB-RpoS complex to the ClpXP protein degradation pathway. The chain is Anti-adapter protein IraP from Escherichia coli (strain SE11).